The following is a 203-amino-acid chain: MKILIATGNRDKLQEIAQIFSDHEVMGYHEIMEPFEIIEDGESFQANAIIKAKAIHERLSAQDRARYLILSDDSGISVPLLHGEPGIYSARYAGEPLSSKRNLQKLIEEIQKRGAERTPAHYTAAMAMILEGRIYTVHGWMHGEAIIAPRGERGFGYDPMFIPQGENRTLGEMEESEKNAISHRAKALKLARKLLQSLTKTEG.

7-12 serves as a coordination point for substrate; sequence TGNRDK. D73 (proton acceptor) is an active-site residue. D73 is a binding site for Mg(2+). Substrate contacts are provided by residues S74, 155–158, K178, and 183–184; these read FGYD and HR.

Belongs to the HAM1 NTPase family. In terms of assembly, homodimer. The cofactor is Mg(2+).

It carries out the reaction XTP + H2O = XMP + diphosphate + H(+). The enzyme catalyses dITP + H2O = dIMP + diphosphate + H(+). It catalyses the reaction ITP + H2O = IMP + diphosphate + H(+). Its function is as follows. Pyrophosphatase that catalyzes the hydrolysis of nucleoside triphosphates to their monophosphate derivatives, with a high preference for the non-canonical purine nucleotides XTP (xanthosine triphosphate), dITP (deoxyinosine triphosphate) and ITP. Seems to function as a house-cleaning enzyme that removes non-canonical purine nucleotides from the nucleotide pool, thus preventing their incorporation into DNA/RNA and avoiding chromosomal lesions. The sequence is that of dITP/XTP pyrophosphatase from Wolinella succinogenes (strain ATCC 29543 / DSM 1740 / CCUG 13145 / JCM 31913 / LMG 7466 / NCTC 11488 / FDC 602W) (Vibrio succinogenes).